Reading from the N-terminus, the 147-residue chain is MVILLGPLLLVFMLGLGLAPLSLAKDEDRYTHFLTQHYDAKPKGRDGRYCESIMKQRGLTRPCKEVNTFIHGTRNDIKAICNDKNGEPYNNFRRSKSPFQITTCKHKGGSNRPPCGYRATAGFRTIAVACENGLPVHFDESFIITSQ.

The signal sequence occupies residues 1–24 (MVILLGPLLLVFMLGLGLAPLSLA). The Proton acceptor role is filled by His-37. Positions 45 and 46 each coordinate tRNA. Disulfide bonds link Cys-50/Cys-104, Cys-63/Cys-115, and Cys-81/Cys-130. The Nucleolar localization signal motif lies at 55 to 59 (KQRGL). The tRNA site is built by Cys-104 and Ile-126. The active-site Proton donor is the His-137.

It belongs to the pancreatic ribonuclease family. In terms of assembly, homodimer. Interacts with RNH1; inhibiting ANG ribonuclease activity. Interacts with PCNA.

It localises to the secreted. It is found in the nucleus. The protein resides in the nucleolus. The protein localises to the cytoplasm. Its subcellular location is the stress granule. With respect to regulation, has weak tRNA ribonuclease activity by itself due to partial autoinhibition by its C-terminus, which folds into a short alpha-helix that partially occludes the substrate-binding site. In absence of stress, the ribonuclease activity is inhibited by RNH1 in the cytoplasm. In response to stress, dissociates from RNH1 in the cytoplasm and associates with cytoplasmic ribosomes with vacant A-sites: ribosomes directly activate the tRNA ribonuclease activity of ANG by refolding the C-terminal alpha-helix. In response to stress, the angiogenic activity of ANG is inhibited by RNH1 in the nucleus. Its function is as follows. Secreted ribonuclease that can either promote or restrict cell proliferation of target cells, depending on the context. Endocytosed in target cells via its receptor PLXNB2 and translocates to the cytoplasm or nucleus. Under stress conditions, localizes to the cytoplasm and promotes the assembly of stress granules (SGs): specifically cleaves a subset of tRNAs within anticodon loops to produce tRNA-derived stress-induced fragments (tiRNAs), resulting in translation repression and inhibition of cell proliferation. tiRNas also prevent formation of apoptosome, thereby promoting cell survival. Preferentially cleaves RNAs between a pyrimidine and an adenosine residue, suggesting that it cleaves the anticodon loop of tRNA(Ala) (32-UUAGCAU-38) after positions 33 and 36. Cleaves a subset of tRNAs, including tRNA(Ala), tRNA(Glu), tRNA(Gly), tRNA(Lys), tRNA(Val), tRNA(His), tRNA(Asp) and tRNA(Sec). Under growth conditions and in differentiated cells, translocates to the nucleus and stimulates ribosomal RNA (rRNA) transcription, including that containing the initiation site sequences of 45S rRNA, thereby promoting cell growth and proliferation. Angiogenin induces vascularization of normal and malignant tissues via its ability to promote rRNA transcription. Involved in hematopoietic stem and progenitor cell (HSPC) growth and survival by promoting rRNA transcription in growth conditions and inhibiting translation in response to stress, respectively. Mediates the crosstalk between myeloid and intestinal epithelial cells to protect the intestinal epithelial barrier integrity: secreted by myeloid cells and promotes intestinal epithelial cells proliferation and survival. Also mediates osteoclast-endothelial cell crosstalk in growing bone: produced by osteoclasts and protects the neighboring vascular cells against senescence by promoting rRNA transcription. In Sus scrofa (Pig), this protein is Angiogenin (ANG).